Consider the following 585-residue polypeptide: A-type ATP synthase subunit A (585 aa).

Residue Gly232 to Thr239 coordinates ATP.

This sequence belongs to the ATPase alpha/beta chains family. In terms of assembly, has multiple subunits with at least A(3), B(3), C, D, E, F, H, I and proteolipid K(x).

It is found in the cell membrane. The enzyme catalyses ATP + H2O + 4 H(+)(in) = ADP + phosphate + 5 H(+)(out). In terms of biological role, component of the A-type ATP synthase that produces ATP from ADP in the presence of a proton gradient across the membrane. The A chain is the catalytic subunit. The chain is A-type ATP synthase subunit A from Methanosphaera stadtmanae (strain ATCC 43021 / DSM 3091 / JCM 11832 / MCB-3).